Here is a 733-residue protein sequence, read N- to C-terminus: Exosome complex exonuclease RRP6 (733 aa).

The residue at position 138 (S138) is a Phosphoserine. The 3'-5' exonuclease domain occupies 214-380; sequence IWVDTSTELE…NIYDQLRNKL (167 aa). Mn(2+)-binding residues include D238 and E240. Zn(2+)-binding residues include D238 and E240. Residues E240 and H241 each contribute to the AMP site. Residues E240 and H241 each coordinate UMP. D296 provides a ligand contact to Mn(2+). AMP contacts are provided by W299, K342, and Q345. 3 residues coordinate UMP: W299, K342, and Q345. D365 is a Mn(2+) binding site. Residue D365 coordinates Zn(2+). An HRDC domain is found at 435–515; sequence PPEREVLVRE…RDALRNIKNT (81 aa). At T520 the chain carries Phosphothreonine. Residues S640 and S645 each carry the phosphoserine modification. Residues 662–733 form a disordered region; that stretch reads IQKKQPAKEK…AKGKNLSFKR (72 aa). Residues 667–680 show a composition bias toward basic and acidic residues; it reads PAKEKGVTEKDAVD. The segment covering 687–697 has biased composition (polar residues); the sequence is ILSNKPGQNNR. 2 consecutive short sequence motifs (nuclear localization signal) follow at residues 700 to 704 and 718 to 721; these read KKRRF and KKRR. Over residues 716 to 733 the composition is skewed to basic residues; sequence AAKKRRPAAKGKNLSFKR.

Belongs to the exosome component 10/RRP6 family. Component of the RNA exosome complex. Specifically part of the catalytically inactive RNA exosome core complex (Exo-9) which may associate with the catalytic subunits RRP6 and DIS3 in cytoplasmic- and nuclear-specific RNA exosome complex forms. Exo-9 is formed by a hexameric base ring of RNase PH domain-containing subunits and a cap ring consisting of CSL4, RRP4 and RRP40. RRP6 specifically is part of the nuclear form of the RNA exosome complex; the association appears to be mediated by Exo-9 and not by DIS3. Interacts with LRP1. Interacts with NPL3, NOP53 and PAP1.

The protein resides in the nucleus. It localises to the nucleolus. Its function is as follows. Nuclear-specific catalytic component of the RNA exosome complex which has 3'-&gt;5' exoribonuclease activity and participates in a multitude of cellular RNA processing and degradation events. In the nucleus, the RNA exosome complex is involved in proper maturation of stable RNA species such as rRNA, snRNA and snoRNA, in the elimination of RNA processing by-products and non-coding 'pervasive' transcripts, such as antisense RNA species and cryptic unstable transcripts (CUTs), and of mRNAs with processing defects, thereby limiting or excluding their export to the cytoplasm. The catalytic inactive RNA exosome core complex of 9 subunits (Exo-9) is proposed to play a pivotal role in the binding and presentation of RNA for ribonucleolysis, and to serve as a scaffold for the association with catalytic subunits and accessory proteins or complexes. RRP6 has 3'-5' exonuclease activity which is not modulated upon association with Exo-9 suggesting that the complex inner RNA-binding path is not used to access its active site. This Saccharomyces cerevisiae (strain ATCC 204508 / S288c) (Baker's yeast) protein is Exosome complex exonuclease RRP6 (RRP6).